We begin with the raw amino-acid sequence, 103 residues long: Thioredoxin-1 (103 aa).

One can recognise a Thioredoxin domain in the interval 2–103 (VKQVSDSSEF…KLEASIKANL (102 aa)). Catalysis depends on nucleophile residues cysteine 30 and cysteine 33. Cysteine 30 and cysteine 33 are oxidised to a cystine.

This sequence belongs to the thioredoxin family.

Participates in various redox reactions through the reversible oxidation of its active center dithiol to a disulfide and catalyzes dithiol-disulfide exchange reactions. This Schizosaccharomyces pombe (strain 972 / ATCC 24843) (Fission yeast) protein is Thioredoxin-1 (trx1).